The sequence spans 478 residues: UDP-N-acetylmuramate--L-alanine ligase (478 aa).

Position 125–131 (125–131 (GTHGKTT)) interacts with ATP.

Belongs to the MurCDEF family.

Its subcellular location is the cytoplasm. The enzyme catalyses UDP-N-acetyl-alpha-D-muramate + L-alanine + ATP = UDP-N-acetyl-alpha-D-muramoyl-L-alanine + ADP + phosphate + H(+). It functions in the pathway cell wall biogenesis; peptidoglycan biosynthesis. Cell wall formation. The chain is UDP-N-acetylmuramate--L-alanine ligase from Dichelobacter nodosus (strain VCS1703A).